The primary structure comprises 312 residues: Ribosomal RNA small subunit methyltransferase H (312 aa).

Residues 32 to 34, aspartate 52, phenylalanine 79, aspartate 100, and glutamine 107 each bind S-adenosyl-L-methionine; that span reads AGH.

It belongs to the methyltransferase superfamily. RsmH family.

Its subcellular location is the cytoplasm. It carries out the reaction cytidine(1402) in 16S rRNA + S-adenosyl-L-methionine = N(4)-methylcytidine(1402) in 16S rRNA + S-adenosyl-L-homocysteine + H(+). Functionally, specifically methylates the N4 position of cytidine in position 1402 (C1402) of 16S rRNA. In Listeria monocytogenes serovar 1/2a (strain ATCC BAA-679 / EGD-e), this protein is Ribosomal RNA small subunit methyltransferase H.